The following is a 256-amino-acid chain: Trypsin epsilon (256 aa).

The N-terminal stretch at 1–22 is a signal peptide; sequence MLKIAVLLSVLACALAGTIPDG. The propeptide at 23 to 30 is activation peptide; it reads LLPQLDGR. In terms of domain architecture, Peptidase S1 spans 31–254; it reads IVGGYETSID…FHEWIERTAR (224 aa). A disulfide bond links C56 and C72. Catalysis depends on charge relay system residues H71 and D116. 2 cysteine pairs are disulfide-bonded: C180–C197 and C206–C230. The active-site Charge relay system is S210.

Belongs to the peptidase S1 family.

It localises to the secreted. The protein localises to the extracellular space. The catalysed reaction is Preferential cleavage: Arg-|-Xaa, Lys-|-Xaa.. In Drosophila erecta (Fruit fly), this protein is Trypsin epsilon (epsilonTry).